A 349-amino-acid polypeptide reads, in one-letter code: tRNA pseudouridine synthase D (349 aa).

Position 27 (Phe27) interacts with substrate. Residue Asp80 is the Nucleophile of the active site. Asn129 serves as a coordination point for substrate. The region spanning 155-303 (GVPNYFGAQR…VEASRRAMLL (149 aa)) is the TRUD domain. Residue Phe329 coordinates substrate.

The protein belongs to the pseudouridine synthase TruD family.

It catalyses the reaction uridine(13) in tRNA = pseudouridine(13) in tRNA. In terms of biological role, responsible for synthesis of pseudouridine from uracil-13 in transfer RNAs. The sequence is that of tRNA pseudouridine synthase D from Salmonella choleraesuis (strain SC-B67).